The chain runs to 578 residues: Probable nucleoredoxin 1 (578 aa).

Thioredoxin domains lie at 18–172 (SLLS…RARR), 178–321 (SVLV…EKFQ), and 325–485 (ELEK…EIEA).

Belongs to the nucleoredoxin family.

The catalysed reaction is [protein]-dithiol + NAD(+) = [protein]-disulfide + NADH + H(+). The enzyme catalyses [protein]-dithiol + NADP(+) = [protein]-disulfide + NADPH + H(+). Its function is as follows. Probable thiol-disulfide oxidoreductase required for pollen tube growth and pollen function in the pistil. Seems not to be required for in vitro pollen tube growth. May be involved in the generation of lipid signaling molecules in pistil. This Arabidopsis thaliana (Mouse-ear cress) protein is Probable nucleoredoxin 1.